Consider the following 135-residue polypeptide: Crossover junction endodeoxyribonuclease Hje (135 aa).

Positions 10, 39, and 52 each coordinate Mg(2+).

Belongs to the Holliday junction resolvase Hjc family. Hje subfamily. As to quaternary structure, homodimer. Mg(2+) is required as a cofactor.

It carries out the reaction Endonucleolytic cleavage at a junction such as a reciprocal single-stranded crossover between two homologous DNA duplexes (Holliday junction).. Its function is as follows. A structure-specific endonuclease that resolves Holliday junction (HJ) intermediates during genetic recombination. Acts only on 4-way DNA junctions in a sequence non-specific manner; introduces paired nicks in opposing strands 2 bases 3' of the point of strand exchange only on continuous strands of 4-way junction DNA. Cleaves both mobile and immobile junctions. Plays a more direct role in DNA repair than Hjc. Overexpression of this protein decreases the growth rate, and leads to genomic instability, and global transcriptomic changes. The sequence is that of Crossover junction endodeoxyribonuclease Hje from Saccharolobus islandicus (strain REY15A) (Sulfolobus islandicus).